Consider the following 168-residue polypeptide: Crossover junction endodeoxyribonuclease RuvC (168 aa).

Active-site residues include Asp-8, Glu-68, and Asp-140. Mg(2+) is bound by residues Asp-8, Glu-68, and Asp-140.

It belongs to the RuvC family. As to quaternary structure, homodimer which binds Holliday junction (HJ) DNA. The HJ becomes 2-fold symmetrical on binding to RuvC with unstacked arms; it has a different conformation from HJ DNA in complex with RuvA. In the full resolvosome a probable DNA-RuvA(4)-RuvB(12)-RuvC(2) complex forms which resolves the HJ. The cofactor is Mg(2+).

The protein resides in the cytoplasm. The enzyme catalyses Endonucleolytic cleavage at a junction such as a reciprocal single-stranded crossover between two homologous DNA duplexes (Holliday junction).. The RuvA-RuvB-RuvC complex processes Holliday junction (HJ) DNA during genetic recombination and DNA repair. Endonuclease that resolves HJ intermediates. Cleaves cruciform DNA by making single-stranded nicks across the HJ at symmetrical positions within the homologous arms, yielding a 5'-phosphate and a 3'-hydroxyl group; requires a central core of homology in the junction. The consensus cleavage sequence is 5'-(A/T)TT(C/G)-3'. Cleavage occurs on the 3'-side of the TT dinucleotide at the point of strand exchange. HJ branch migration catalyzed by RuvA-RuvB allows RuvC to scan DNA until it finds its consensus sequence, where it cleaves and resolves the cruciform DNA. This Gluconobacter oxydans (strain 621H) (Gluconobacter suboxydans) protein is Crossover junction endodeoxyribonuclease RuvC.